We begin with the raw amino-acid sequence, 225 residues long: Methylthioribulose-1-phosphate dehydratase (225 aa).

Positions 106 and 108 each coordinate Zn(2+).

Belongs to the aldolase class II family. MtnB subfamily. Zn(2+) is required as a cofactor.

It catalyses the reaction 5-(methylsulfanyl)-D-ribulose 1-phosphate = 5-methylsulfanyl-2,3-dioxopentyl phosphate + H2O. The protein operates within amino-acid biosynthesis; L-methionine biosynthesis via salvage pathway; L-methionine from S-methyl-5-thio-alpha-D-ribose 1-phosphate: step 2/6. Functionally, catalyzes the dehydration of methylthioribulose-1-phosphate (MTRu-1-P) into 2,3-diketo-5-methylthiopentyl-1-phosphate (DK-MTP-1-P). This is Methylthioribulose-1-phosphate dehydratase from Xanthomonas oryzae pv. oryzae (strain MAFF 311018).